The primary structure comprises 33 residues: Putative makorin-5 (33 aa).

This Homo sapiens (Human) protein is Putative makorin-5 (MKRN9P).